A 167-amino-acid chain; its full sequence is Photosystem I assembly protein Ycf3 (167 aa).

3 TPR repeats span residues 35 to 68, 72 to 105, and 120 to 153; these read AFAYYRDGMSAQSEGEYAEALQNYYEAMRLEVDA, SYILYNIGLIHTSNGEHARALEYYYQALERNPSL, and GEQAIEKGQAEISSLLFDKAADYWKEAIRLAPTN.

Belongs to the Ycf3 family.

The protein resides in the plastid. It localises to the chloroplast thylakoid membrane. In terms of biological role, essential for the assembly of the photosystem I (PSI) complex. May act as a chaperone-like factor to guide the assembly of the PSI subunits. This is Photosystem I assembly protein Ycf3 from Stigeoclonium helveticum (Green alga).